A 213-amino-acid chain; its full sequence is ER lumen protein-retaining receptor (213 aa).

Residues 1–2 (MN) lie on the Lumenal side of the membrane. A helical transmembrane segment spans residues 3-21 (IFRITADLAHAVAIVILLL). The Cytoplasmic portion of the chain corresponds to 22–35 (KIWKSRSCEGISGR). A helical membrane pass occupies residues 36–53 (SQILFAVTFFTRYLDLFT). Over 54 to 61 (SFYSLYNT) the chain is Lumenal. The helical transmembrane segment at 62–80 (VMKVLFLAGSIGTVYLMWV) threads the bilayer. At 81–96 (KFKATYDRNNDTFRIE) the chain is on the cytoplasmic side. The chain crosses the membrane as a helical span at residues 97–110 (FLVIPSIILALIIN). The Lumenal portion of the chain corresponds to 111 to 117 (HEFMFME). The helical transmembrane segment at 118-137 (VMWTFSIYLEAVAIMPQLFM) threads the bilayer. Residues 138-149 (LSRTGNAETITA) lie on the Cytoplasmic side of the membrane. The chain crosses the membrane as a helical span at residues 150-168 (HYLFALGSYRFLYIFNWVY). The Lumenal portion of the chain corresponds to 169-178 (RYYTESFFDP). A helical transmembrane segment spans residues 179–199 (IAVVAGIVQTVLYADFFYLYI). The Cytoplasmic segment spans residues 200–213 (TRVIQSNRQFEMSA).

This sequence belongs to the ERD2 family.

The protein resides in the endoplasmic reticulum membrane. Required for the retention of luminal endoplasmic reticulum proteins. Determines the specificity of the luminal ER protein retention system. Also required for normal vesicular traffic through the Golgi. The polypeptide is ER lumen protein-retaining receptor (erd-2.1) (Caenorhabditis briggsae).